Consider the following 265-residue polypeptide: 3-methyl-2-oxobutanoate hydroxymethyltransferase (265 aa).

Residues aspartate 43 and aspartate 82 each contribute to the Mg(2+) site. 3-methyl-2-oxobutanoate is bound by residues 43-44 (DS), aspartate 82, and lysine 111. Glutamate 113 is a Mg(2+) binding site. Glutamate 180 (proton acceptor) is an active-site residue.

This sequence belongs to the PanB family. As to quaternary structure, homodecamer; pentamer of dimers. The cofactor is Mg(2+).

The protein localises to the cytoplasm. The enzyme catalyses 3-methyl-2-oxobutanoate + (6R)-5,10-methylene-5,6,7,8-tetrahydrofolate + H2O = 2-dehydropantoate + (6S)-5,6,7,8-tetrahydrofolate. Its pathway is cofactor biosynthesis; (R)-pantothenate biosynthesis; (R)-pantoate from 3-methyl-2-oxobutanoate: step 1/2. Its function is as follows. Catalyzes the reversible reaction in which hydroxymethyl group from 5,10-methylenetetrahydrofolate is transferred onto alpha-ketoisovalerate to form ketopantoate. The sequence is that of 3-methyl-2-oxobutanoate hydroxymethyltransferase from Francisella tularensis subsp. mediasiatica (strain FSC147).